The chain runs to 249 residues: Tryptophan synthase alpha chain (249 aa).

Active-site proton acceptor residues include Glu43 and Asp54.

This sequence belongs to the TrpA family. As to quaternary structure, tetramer of two alpha and two beta chains.

The catalysed reaction is (1S,2R)-1-C-(indol-3-yl)glycerol 3-phosphate + L-serine = D-glyceraldehyde 3-phosphate + L-tryptophan + H2O. The protein operates within amino-acid biosynthesis; L-tryptophan biosynthesis; L-tryptophan from chorismate: step 5/5. In terms of biological role, the alpha subunit is responsible for the aldol cleavage of indoleglycerol phosphate to indole and glyceraldehyde 3-phosphate. This is Tryptophan synthase alpha chain from Campylobacter jejuni subsp. jejuni serotype O:23/36 (strain 81-176).